Here is a 435-residue protein sequence, read N- to C-terminus: NADH-ubiquinone oxidoreductase chain 4 (435 aa).

13 helical membrane-spanning segments follow: residues 27 to 47 (VLTI…ELNG), 53 to 73 (FVMG…YLSS), 80 to 100 (ASFN…FSVS), 102 to 122 (FFLF…LIVG), 132 to 152 (AGGY…WGVS), 177 to 197 (LWWL…FHLW), 206 to 226 (PVAG…YGLL), 239 to 259 (VFFV…GLAC), 267 to 285 (CLVA…LGVL), 295 to 317 (AIII…NAIY), 324 to 344 (LLVM…MCFL), 372 to 394 (SXAF…LYLY), and 414 to 434 (LCDV…FMFM).

This sequence belongs to the complex I subunit 4 family.

Its subcellular location is the mitochondrion membrane. It carries out the reaction a ubiquinone + NADH + 5 H(+)(in) = a ubiquinol + NAD(+) + 4 H(+)(out). In terms of biological role, core subunit of the mitochondrial membrane respiratory chain NADH dehydrogenase (Complex I) that is believed to belong to the minimal assembly required for catalysis. Complex I functions in the transfer of electrons from NADH to the respiratory chain. The immediate electron acceptor for the enzyme is believed to be ubiquinone. The protein is NADH-ubiquinone oxidoreductase chain 4 (ND4) of Mytilus edulis (Blue mussel).